Here is a 525-residue protein sequence, read N- to C-terminus: Cytochrome P450 monooxygenase ltmJ (525 aa).

Residues 21-43 (LTWWQTIVSFIIFCIMCSWLPGN) form a helical membrane-spanning segment. N-linked (GlcNAc...) asparagine glycosylation is present at asparagine 136. Cysteine 465 serves as a coordination point for heme.

This sequence belongs to the cytochrome P450 family. Heme is required as a cofactor.

The protein resides in the membrane. It functions in the pathway secondary metabolite biosynthesis. Cytochrome P450 monooxygenase; part of the gene clusters that mediates the biosynthesis of lolitrems, indole-diterpene mycotoxins that are potent tremorgens in mammals, and are synthesized by clavicipitaceous fungal endophytes in association with their grass hosts. The geranylgeranyl diphosphate (GGPP) synthase ltmG is proposed to catalyze the first step in lolitrem biosynthesis. LtmG catalyzes a series of iterative condensations of isopentenyl diphosphate (IPP) with dimethylallyl diphosphate (DMAPP), geranyl diphosphate (GPP), and farnesyl diphosphate (FPP), to form GGPP. GGPP then condenses with indole-3-glycerol phosphate to form 3-geranylgeranylindole, an acyclic intermediate, to be incorporated into paxilline. Either ltmG or ltmC could be responsible for this step, as both are putative prenyl transferases. The FAD-dependent monooxygenase ltmM then catalyzes the epoxidation of the two terminal alkenes of the geranylgeranyl moiety, which is subsequently cyclized by ltmB, to paspaline. The cytochrome P450 monooxygenases ltmQ and ltmP can sequentially oxidize paspaline to terpendole E and terpendole F. Alternatively, ltmP converts paspaline to an intermediate which is oxidized by ltmQ to terpendole F. LtmF, ltmK, ltmE and ltmJ appear to be unique to the epichloe endophytes. The prenyltransferase ltmF is involved in the 27-hydroxyl-O-prenylation. The cytochrome P450 monooxygenase ltmK is required for the oxidative acetal ring formation. The multi-functional prenyltransferase ltmE is required for C20- and C21-prenylations of the indole ring of paspalanes and acts together with the cytochrome P450 monooxygenase ltmJ to yield lolitremanes by multiple oxidations and ring closures. The stereoisomer pairs of lolitriol and lolitrem N or lolitrem B and lolitrem F may be attributed to variations in the way in which ring closure can occur under the action of ltmJ. While the major product of this pathway is lolitrem B, the prenyl transferases and cytochrome P450 monooxygenases identified in this pathway have a remarkable versatility in their regio- and stereo-specificities to generate a diverse range of metabolites that are products of a metabolic grid rather than a linear pathway. The protein is Cytochrome P450 monooxygenase ltmJ (ltmJ) of Epichloe festucae var. lolii (Neotyphodium lolii).